The chain runs to 247 residues: Adenosylcobinamide-GDP ribazoletransferase (247 aa).

The next 5 helical transmembrane spans lie at 34-54 (IITF…VFMV), 59-79 (CGAP…TGGF), 113-133 (GGLA…ELAL), 138-158 (ILAS…LLMY), and 194-214 (VLLP…AIFI).

The protein belongs to the CobS family. It depends on Mg(2+) as a cofactor.

The protein resides in the cell inner membrane. It carries out the reaction alpha-ribazole + adenosylcob(III)inamide-GDP = adenosylcob(III)alamin + GMP + H(+). The catalysed reaction is alpha-ribazole 5'-phosphate + adenosylcob(III)inamide-GDP = adenosylcob(III)alamin 5'-phosphate + GMP + H(+). The protein operates within cofactor biosynthesis; adenosylcobalamin biosynthesis; adenosylcobalamin from cob(II)yrinate a,c-diamide: step 7/7. Joins adenosylcobinamide-GDP and alpha-ribazole to generate adenosylcobalamin (Ado-cobalamin). Also synthesizes adenosylcobalamin 5'-phosphate from adenosylcobinamide-GDP and alpha-ribazole 5'-phosphate. The polypeptide is Adenosylcobinamide-GDP ribazoletransferase (Escherichia coli O45:K1 (strain S88 / ExPEC)).